The following is a 500-amino-acid chain: Glycerol kinase (500 aa).

Threonine 12 lines the ADP pocket. Residues threonine 12, threonine 13, and serine 14 each coordinate ATP. Threonine 12 provides a ligand contact to sn-glycerol 3-phosphate. Arginine 16 is an ADP binding site. Sn-glycerol 3-phosphate is bound by residues arginine 82, glutamate 83, tyrosine 134, and aspartate 244. Arginine 82, glutamate 83, tyrosine 134, aspartate 244, and glutamine 245 together coordinate glycerol. ADP contacts are provided by threonine 266 and glycine 309. Threonine 266, glycine 309, glutamine 313, and glycine 410 together coordinate ATP. 2 residues coordinate ADP: glycine 410 and asparagine 414.

This sequence belongs to the FGGY kinase family. In terms of assembly, homotetramer and homodimer (in equilibrium).

The catalysed reaction is glycerol + ATP = sn-glycerol 3-phosphate + ADP + H(+). The protein operates within polyol metabolism; glycerol degradation via glycerol kinase pathway; sn-glycerol 3-phosphate from glycerol: step 1/1. With respect to regulation, activated by phosphorylation and inhibited by fructose 1,6-bisphosphate (FBP). In terms of biological role, key enzyme in the regulation of glycerol uptake and metabolism. Catalyzes the phosphorylation of glycerol to yield sn-glycerol 3-phosphate. The polypeptide is Glycerol kinase (Alkaliphilus metalliredigens (strain QYMF)).